The chain runs to 829 residues: Pre-mRNA-splicing factor syf1 (829 aa).

HAT repeat units follow at residues 15–47 (SLVSEEDFPYEQDIVRNPGSTKPWLAYIEYKLQ), 49–81 (GTVQEQAYIMERACVQLPRSYKLWKMYLRFRTK), 93–125 (SEYQKVNSLFERALILLNKMPRIWEMYLKFLMQ), 127–161 (PLVTHTRRTFDRALRALPITQHNRIWALYRPFANS), 163–182 (EGETAVKIWRRYMQVHPEDA), 277–312 (GSFERARDVFEEGITTVMTVRDFTLVFDSYTEFEES), 380–418 (DNKEEVVKTYLDAIEAIQPKKAVGALHQLWTNYAKFYEA), 420–456 (GDLSSARRIMEKAVKVPYKSVAELADMWIEWAEMELR), 473–505 (APKRSTVDYFDETLSPQQRVHKSWKLWSFYVDL), 544–578 (KYFEESFKIYERGLDLFSYPVAFELWNLYLTKAVD), 581–615 (ISIERLRDLFEQAVEDCPPKFAKVIYLMYGNLEEE), and 689–723 (GEIDRARAIYGHASQFCDPRTNPGFWTKWDQFEVQ). Positions 799–829 (AASEGPKGGSMPVQPVEVHNPDAIDLDEMDE) are disordered.

This sequence belongs to the crooked-neck family. Associated with the spliceosome.

It is found in the nucleus. Functionally, involved in pre-mRNA splicing and cell cycle progression. The protein is Pre-mRNA-splicing factor syf1 (msp-41) of Neurospora crassa (strain ATCC 24698 / 74-OR23-1A / CBS 708.71 / DSM 1257 / FGSC 987).